The primary structure comprises 258 residues: NAD kinase (258 aa).

The active-site Proton acceptor is the Asp-44. NAD(+)-binding positions include 44–45, 116–117, Asp-146, Ala-154, and 157–162; these read DG, NE, and TAYNLS.

The protein belongs to the NAD kinase family. The cofactor is a divalent metal cation.

The protein resides in the cytoplasm. The catalysed reaction is NAD(+) + ATP = ADP + NADP(+) + H(+). In terms of biological role, involved in the regulation of the intracellular balance of NAD and NADP, and is a key enzyme in the biosynthesis of NADP. Catalyzes specifically the phosphorylation on 2'-hydroxyl of the adenosine moiety of NAD to yield NADP. In Zymomonas mobilis subsp. mobilis (strain ATCC 31821 / ZM4 / CP4), this protein is NAD kinase.